The primary structure comprises 226 residues: tRNA (guanine-N(1)-)-methyltransferase (226 aa).

Residues Gly110 and 129–134 contribute to the S-adenosyl-L-methionine site; that span reads IGDYIL.

It belongs to the RNA methyltransferase TrmD family. In terms of assembly, homodimer.

The protein resides in the cytoplasm. It catalyses the reaction guanosine(37) in tRNA + S-adenosyl-L-methionine = N(1)-methylguanosine(37) in tRNA + S-adenosyl-L-homocysteine + H(+). Functionally, specifically methylates guanosine-37 in various tRNAs. The protein is tRNA (guanine-N(1)-)-methyltransferase of Malacoplasma penetrans (strain HF-2) (Mycoplasma penetrans).